An 88-amino-acid chain; its full sequence is Cell division topological specificity factor (88 aa).

This sequence belongs to the MinE family.

Prevents the cell division inhibition by proteins MinC and MinD at internal division sites while permitting inhibition at polar sites. This ensures cell division at the proper site by restricting the formation of a division septum at the midpoint of the long axis of the cell. This Clostridium botulinum (strain Alaska E43 / Type E3) protein is Cell division topological specificity factor.